Consider the following 389-residue polypeptide: tRNA-specific 2-thiouridylase MnmA (389 aa).

Residues 30–37 (GLSGGVDS) and Leu56 each bind ATP. Cys117 serves as the catalytic Nucleophile. Cys117 and Cys216 form a disulfide bridge. Gly142 contributes to the ATP binding site. The segment at 166–168 (KDQ) is interaction with tRNA. Catalysis depends on Cys216, which acts as the Cysteine persulfide intermediate. The tract at residues 321-322 (RY) is interaction with tRNA.

This sequence belongs to the MnmA/TRMU family.

The protein resides in the cytoplasm. It carries out the reaction S-sulfanyl-L-cysteinyl-[protein] + uridine(34) in tRNA + AH2 + ATP = 2-thiouridine(34) in tRNA + L-cysteinyl-[protein] + A + AMP + diphosphate + H(+). Its function is as follows. Catalyzes the 2-thiolation of uridine at the wobble position (U34) of tRNA, leading to the formation of s(2)U34. The sequence is that of tRNA-specific 2-thiouridylase MnmA from Synechococcus sp. (strain CC9902).